Consider the following 519-residue polypeptide: MIDLEALPHLPGCYLFKNEEGTVIYVGKAKDLKKRVSSYFQKREHDPKTASLIEAVRGFDFIVTNTEVEAFLLENTLIKKHWPRYNILLKDSKRYACIHLTEEKFPRIRLSRKKADNGSFFGPFVSAKERDYIFEVVRKTFQLRTCKKMPKRACLRYHIAACSGPCIGAISAEDYAEKVKKAASVLKGNIRELIESMEKDMRELASRQQFEQAMALRDEIAALEYLQEKQNMERQKKHNEDILNYIVRDDTVYLMLFKVYKGTLEDKQDYVFAFGENFLEEFLVQYYSENEPPEELILPEPLEESLVDFLSHVKGTKVKVTVPKQGEKKELLDLALKNVEIGFFGDRKKLEALQSKLSLPKLPNVIECFDISHLSGTSTVGSMVQFRGGRPDKHNYRRFKIESVEGIDDFASIAEVVRRRYSRLLEDKHDLPDLIIIDGGKGQLSSAFQELRKLKVRVPLISIAKREEEIYVPGIKSPLPIKKEEKASLFVQEIRDEAHRFAITYNRLLRQKSMIPKND.

Residues 9 to 87 form the GIY-YIG domain; it reads HLPGCYLFKN…IKKHWPRYNI (79 aa). Residues 191–226 form the UVR domain; that stretch reads RELIESMEKDMRELASRQQFEQAMALRDEIAALEYL.

It belongs to the UvrC family. As to quaternary structure, interacts with UvrB in an incision complex.

It is found in the cytoplasm. Its function is as follows. The UvrABC repair system catalyzes the recognition and processing of DNA lesions. UvrC both incises the 5' and 3' sides of the lesion. The N-terminal half is responsible for the 3' incision and the C-terminal half is responsible for the 5' incision. This is UvrABC system protein C from Methanosarcina barkeri (strain Fusaro / DSM 804).